Consider the following 337-residue polypeptide: Phosphate acyltransferase (337 aa).

It belongs to the PlsX family. In terms of assembly, homodimer. Probably interacts with PlsY.

The protein resides in the cytoplasm. It catalyses the reaction a fatty acyl-[ACP] + phosphate = an acyl phosphate + holo-[ACP]. It participates in lipid metabolism; phospholipid metabolism. Its function is as follows. Catalyzes the reversible formation of acyl-phosphate (acyl-PO(4)) from acyl-[acyl-carrier-protein] (acyl-ACP). This enzyme utilizes acyl-ACP as fatty acyl donor, but not acyl-CoA. The protein is Phosphate acyltransferase of Moritella marina (Vibrio marinus).